A 473-amino-acid polypeptide reads, in one-letter code: MFIVVVTIFENYTQWYSSLLTIFSLTIKRKLKTIRSMQDSTSKCTCTEHHMGGTICCCCRSDAEENEQLTSVILSRKPPPQEQCRGNLLVFINPNSGTGKSLETFANTVGPKLDKSLIRYEVVVTTGPNHARNVLMTKADLGKFNGVLILSGDGLVFEALNGILCREDAFRIFPTLPIGIVPSGSGNGLLCSVLSKYGTKMNEKSVMERALEIATSPTAKAESVALYSVKTDNQSYASFLSIGWGLMADIDIDSEKWRKSLGHHRFTVMGFIRSCNLRSYKGRLTYRPYKPKGFHPSSNVFSVYEKTTQQRIDDSKVKTNGSVSDSEEETMETKFQNWTLPDSDETLAVGSSDLEETVVIEDNFVNIYAVTLSHIAADGPFAPSAKLEDNRIHLSYILWKDIGTRVNIAKYLLAIEHETHLDLPFVKHVEVSSMKLEVISEGSHVVLDGEVVDTKTIEVASTKNHISVFSSTA.

Positions Q83–N233 constitute a DAGKc domain. ATP contacts are provided by residues N93–N95 and T125–N129. A substrate-binding site is contributed by S151–G154. Residue D153 is the Proton donor/acceptor of the active site. ATP is bound by residues E158 and G184–G186. Position 251 (D251) interacts with substrate. ATP-binding positions include R258, R265, and D448 to E450.

The cofactor is Mg(2+). Expressed in the majority of cholinergic and GABAergic neurons, body wall muscle, excretory canal cells, intestine, and hypodermis.

It is found in the presynaptic cell membrane. It localises to the cell projection. The protein resides in the axon. Its subcellular location is the perikaryon. The protein localises to the mitochondrion membrane. The enzyme catalyses a sphingoid base + ATP = a sphingoid 1-phosphate + ADP + H(+). The catalysed reaction is 15-methylhexadecasphing-4-enine + ATP = 15-methylhexadecasphing-4-enine 1-phosphate + ADP + H(+). It catalyses the reaction 15-methylhexadecasphinganine + ATP = 15-methylhexadecasphinganine 1-phosphate + ADP + H(+). The protein operates within lipid metabolism; sphingolipid metabolism. Catalyzes the phosphorylation of sphingoid bases to form sphingoid 1-phosphate (SPP), which have both intra- and extracellular functions. C.elegans contain specific sphingoid bases, which are unique or different in structure compared to the sphingoid bases found in other animals. Two examples of these distinctive compounds are: 15-methylhexadecasphinganine and 15-methylhexadecasphing-4-enine. Required for neurotransmitter release from neuromuscular junctions. Acts by recruiting the synaptic vesicle priming protein unc-13 to synapses. The protein is Sphingosine kinase 1 (sphk-1) of Caenorhabditis elegans.